Consider the following 170-residue polypeptide: Flavin reductase (170 aa).

Residues Ser51, His138, and 159–162 contribute to the NAD(+) site; that span reads FYRG.

It belongs to the non-flavoprotein flavin reductase family. As to quaternary structure, homodimer. Likely forms a loose transient complex with monooxygenases for which it provides FMNH(2).

The catalysed reaction is FMNH2 + NAD(+) = FMN + NADH + 2 H(+). It catalyses the reaction FADH2 + NAD(+) = FAD + NADH + 2 H(+). Its function is as follows. Catalyzes the reduction of FMN, and to a lesser extent, FAD, using NADH as an electron donor. Is able to provide the FMNH(2) required for the Baeyer-Villiger oxidations catalyzed by 2,5-diketocamphane monooxygenases and 3,6-diketocamphane monooxygenase. NADPH acts as a very poor cosubstrate. The polypeptide is Flavin reductase (Pseudomonas putida (Arthrobacter siderocapsulatus)).